The following is a 700-amino-acid chain: UvrABC system protein B (700 aa).

A Helicase ATP-binding domain is found at 26 to 183 (SGLHRGDRIQ…RALVGIQYLR (158 aa)). 39-46 (GVTGSGKT) serves as a coordination point for ATP. The Beta-hairpin motif lies at 92-115 (YYDYYQPEAYVPSSDTYIEKDASI). In terms of domain architecture, Helicase C-terminal spans 430–596 (QVDDLLHEIR…GVTKSVDEVR (167 aa)). The tract at residues 608-627 (REGEAPAPRRLASESAPRSR) is disordered. In terms of domain architecture, UVR spans 631-666 (ETLVGELEIAMREAAVALDFEAAARLRDQLFEVRTA). The disordered stretch occupies residues 667 to 700 (LGQAPSEARGNAQAPKRPPGSAPQRRAGGGRRGR).

This sequence belongs to the UvrB family. As to quaternary structure, forms a heterotetramer with UvrA during the search for lesions. Interacts with UvrC in an incision complex.

The protein resides in the cytoplasm. Its function is as follows. The UvrABC repair system catalyzes the recognition and processing of DNA lesions. A damage recognition complex composed of 2 UvrA and 2 UvrB subunits scans DNA for abnormalities. Upon binding of the UvrA(2)B(2) complex to a putative damaged site, the DNA wraps around one UvrB monomer. DNA wrap is dependent on ATP binding by UvrB and probably causes local melting of the DNA helix, facilitating insertion of UvrB beta-hairpin between the DNA strands. Then UvrB probes one DNA strand for the presence of a lesion. If a lesion is found the UvrA subunits dissociate and the UvrB-DNA preincision complex is formed. This complex is subsequently bound by UvrC and the second UvrB is released. If no lesion is found, the DNA wraps around the other UvrB subunit that will check the other stand for damage. The polypeptide is UvrABC system protein B (Gemmatimonas aurantiaca (strain DSM 14586 / JCM 11422 / NBRC 100505 / T-27)).